We begin with the raw amino-acid sequence, 154 residues long: Protein-export protein SecB (154 aa).

Belongs to the SecB family. Homotetramer, a dimer of dimers. One homotetramer interacts with 1 SecA dimer.

The protein localises to the cytoplasm. Functionally, one of the proteins required for the normal export of preproteins out of the cell cytoplasm. It is a molecular chaperone that binds to a subset of precursor proteins, maintaining them in a translocation-competent state. It also specifically binds to its receptor SecA. In Buchnera aphidicola subsp. Schizaphis graminum (strain Sg), this protein is Protein-export protein SecB.